The primary structure comprises 1136 residues: Tyrosine-protein kinase receptor Tie-1 (1136 aa).

A signal peptide spans 1 to 23 (MVWLEPPLLLPIFFLASHVGAAV). At 24 to 757 (DLTLLADLRL…IHAAEEGLDQ (734 aa)) the chain is on the extracellular side. Residues 43–106 (CVSGEAGAGR…PSDLVGVFSC (64 aa)) form the Ig-like C2-type 1 domain. 2 N-linked (GlcNAc...) asparagine glycosylation sites follow: Asn84 and Asn159. EGF-like domains follow at residues 212–254 (GCEA…TRCE), 256–301 (ACRE…SQCQ), and 303–343 (ACAP…MHCE). 3 disulfides stabilise this stretch: Cys226–Cys235, Cys229–Cys242, and Cys244–Cys253. Disulfide bonds link Cys317–Cys325, Cys319–Cys331, and Cys333–Cys342. The region spanning 370–424 (CAAAGNPFPVRGSMELRKPDGTVLLSTKAIVEPDRTTAEFEVPRLALGDSGLWEC) is the Ig-like C2-type 2 domain. 3 Fibronectin type-III domains span residues 444 to 543 (PPVP…CPEP), 546 to 640 (KPWL…LPPS), and 644 to 737 (APRH…TLGN). N-linked (GlcNAc...) asparagine glycans are attached at residues Asn501, Asn594, and Asn707. Residues 758–782 (QLVLAVVGSVSATCLTILAALLTLA) traverse the membrane as a helical segment. Over 783–1136 (CIRKSCLHRR…AGIDATAEEA (354 aa)) the chain is Cytoplasmic. The Protein kinase domain occupies 837–1116 (ITFEDLIGEG…RMLEARKAYV (280 aa)). Residues 843–851 (IGEGNFGQV) and Lys868 contribute to the ATP site. Asp977 (proton acceptor) is an active-site residue. Tyr1005 bears the Phosphotyrosine; by autocatalysis mark.

The protein belongs to the protein kinase superfamily. Tyr protein kinase family. Tie subfamily. Heterodimer with TEK/TIE2. Interacts with SVEP1 (via C-terminus). Phosphorylated on tyrosine residues in response to ANGPT1, most likely by TEK/TIE2. As to expression, specifically expressed in developing vascular endothelial cells.

The protein resides in the cell membrane. It carries out the reaction L-tyrosyl-[protein] + ATP = O-phospho-L-tyrosyl-[protein] + ADP + H(+). Transmembrane tyrosine-protein kinase that may modulate TEK/TIE2 activity and contribute to the regulation of angiogenesis. The sequence is that of Tyrosine-protein kinase receptor Tie-1 (TIE1) from Bos taurus (Bovine).